The chain runs to 1431 residues: Stabilin-2 (1431 aa).

At 1–1322 the chain is on the extracellular side; the sequence is SLPSLLTRLE…PPTAATAAHS (1322 aa). Residues 2–130 enclose the FAS1 domain; sequence LPSLLTRLEQ…GVIHGLEKVL (129 aa). 2 N-linked (GlcNAc...) asparagine glycosylation sites follow: asparagine 112 and asparagine 140. A Laminin EGF-like 1 domain is found at 207 to 272; the sequence is PQCQACPGRG…CSCVHGRCSQ (66 aa). Cystine bridges form between cysteine 212/cysteine 226, cysteine 220/cysteine 236, cysteine 238/cysteine 247, cysteine 259/cysteine 270, cysteine 263/cysteine 280, cysteine 282/cysteine 291, cysteine 300/cysteine 310, cysteine 304/cysteine 320, cysteine 322/cysteine 333, cysteine 339/cysteine 352, cysteine 346/cysteine 362, cysteine 364/cysteine 375, cysteine 381/cysteine 394, cysteine 388/cysteine 404, cysteine 406/cysteine 417, cysteine 423/cysteine 436, cysteine 430/cysteine 446, and cysteine 448/cysteine 459. N-linked (GlcNAc...) asparagine glycans are attached at residues asparagine 231 and asparagine 243. 4 consecutive EGF-like domains span residues 296-334, 335-376, 377-418, and 419-460; these read TTDN…TVCT, AINA…IVCL, EINP…KVCS, and LINV…IVCR. Residue asparagine 301 is glycosylated (N-linked (GlcNAc...) asparagine). Asparagine 329 carries N-linked (GlcNAc...) asparagine glycosylation. An N-linked (GlcNAc...) asparagine glycan is attached at asparagine 437. FAS1 domains are found at residues 460–588 and 604–745; these read RGSI…DKLL and VLQN…DCLL. A glycan (N-linked (GlcNAc...) asparagine) is linked at asparagine 607. Positions 822–887 constitute a Laminin EGF-like 2 domain; it reads PDCQACPGGP…SCSEHGQCDE (66 aa). 6 cysteine pairs are disulfide-bonded: cysteine 827/cysteine 841, cysteine 835/cysteine 851, cysteine 853/cysteine 862, cysteine 874/cysteine 885, cysteine 879/cysteine 895, and cysteine 897/cysteine 906. Asparagine 858 is a glycosylation site (N-linked (GlcNAc...) asparagine). An N-linked (GlcNAc...) asparagine glycan is attached at asparagine 929. EGF-like domains lie at 947–987 and 988–1030; these read VVDF…YSCI and EIDP…VDCE. 8 disulfide bridges follow: cysteine 951-cysteine 964, cysteine 958-cysteine 973, cysteine 975-cysteine 986, cysteine 992-cysteine 1006, cysteine 1000-cysteine 1016, cysteine 1018-cysteine 1029, cysteine 1085-cysteine 1154, and cysteine 1109-cysteine 1130. Residues 1063-1156 enclose the Link domain; sequence GVFHLRSPLG…SEMWDVFCYR (94 aa). N-linked (GlcNAc...) asparagine glycosylation is found at asparagine 1145, asparagine 1161, asparagine 1233, asparagine 1249, and asparagine 1258. Residues 1176–1310 form the FAS1 4 domain; that stretch reads SGNLLQVLMS…GILHIISEPL (135 aa). The chain crosses the membrane as a helical span at residues 1323–1343; the sequence is GLGTGIFCAVVLVTGAIALAA. Residues 1344 to 1431 lie on the Cytoplasmic side of the membrane; it reads YSYFRLKQRT…QQATTVTVPR (88 aa). The interaction with TMSB4X stretch occupies residues 1368–1378; the sequence is WLLASSSPRIS.

In terms of assembly, interacts with GULP1, heparin, alpha-M/beta-2 integrin (ITGAM and ITGB2), and thymosin beta 4 (TMSB4X). Post-translationally, glycosylated. Proteolytically processed to yield a 175 kDa protein. Initially expressed in all vascular cells, including those of sinusoidal-like structures, vitellin veins, and hepatic veins or sinus venosus, in E13.5 fetal liver. The expression then progressively disappears in the portal and hepatic veins, but the expression in sinusoidals endothelial cells (SECs) is retained and becomes stronger during development.

Its subcellular location is the cytoplasm. The protein localises to the cell membrane. Functionally, phosphatidylserine receptor that enhances the engulfment of apoptotic cells. Hyaluronan receptor that binds to and mediates endocytosis of hyaluronic acid (HA). Also acts, in different species, as a primary systemic scavenger receptor for heparin (Hep), chondroitin sulfate (CS), dermatan sulfate (DS), nonglycosaminoglycan (GAG), acetylated low-density lipoprotein (AcLDL), pro-collagen propeptides and advanced glycation end products (AGE). May serve to maintain tissue integrity by supporting extracellular matrix turnover or it may contribute to maintaining fluidity of bodily liquids by resorption of hyaluronan. Counter receptor which plays an important role in lymphocyte recruitment in the hepatic vasculature. Binds to both Gram-positive and Gram-negative bacteria and may play a role in defense against bacterial infection. The proteolytically processed 175 kDa form also functions as an endocytosis receptor for heparin internalization as well as HA and CS. In Rattus norvegicus (Rat), this protein is Stabilin-2.